Here is a 136-residue protein sequence, read N- to C-terminus: Small ribosomal subunit protein uS8c (136 aa).

Belongs to the universal ribosomal protein uS8 family. As to quaternary structure, part of the 30S ribosomal subunit.

The protein localises to the plastid. The protein resides in the chloroplast. In terms of biological role, one of the primary rRNA binding proteins, it binds directly to 16S rRNA central domain where it helps coordinate assembly of the platform of the 30S subunit. The chain is Small ribosomal subunit protein uS8c (rps8) from Saccharum officinarum (Sugarcane).